The chain runs to 377 residues: Glutamate 5-kinase (377 aa).

Lysine 22 is a binding site for ATP. 3 residues coordinate substrate: serine 62, aspartate 149, and asparagine 161. Residues 181-182 (TD) and 223-229 (TGGMVTK) each bind ATP. Residues 285-363 (RGAIVVDAGA…AQLKRFLGPQ (79 aa)) form the PUA domain.

It belongs to the glutamate 5-kinase family.

The protein localises to the cytoplasm. It catalyses the reaction L-glutamate + ATP = L-glutamyl 5-phosphate + ADP. It participates in amino-acid biosynthesis; L-proline biosynthesis; L-glutamate 5-semialdehyde from L-glutamate: step 1/2. Its function is as follows. Catalyzes the transfer of a phosphate group to glutamate to form L-glutamate 5-phosphate. This Bifidobacterium longum subsp. infantis (strain ATCC 15697 / DSM 20088 / JCM 1222 / NCTC 11817 / S12) protein is Glutamate 5-kinase.